A 226-amino-acid polypeptide reads, in one-letter code: MKPEPQSEAELMERAHDIAGLSFAELADEAGMTVPENLKRDKGWVGQLLEWHLGAPAGSKPQQDFSKLGIELKSIPIGYNGRPLETTFVCVAPLTGVQGLTWETSHVRNKLSRVLWVPVEGEREIPLAERRVGTPLIWSPDKEEEQILRNDWEELMEMIVFGKFDQISARHGEALHLRPKAANAKALTEAYSSNGKPMKTLPRGFYLRTQFTEQILLKHYINVQSE.

The protein belongs to the MutH family.

The protein resides in the cytoplasm. Its function is as follows. Sequence-specific endonuclease that cleaves unmethylated GATC sequences. It is involved in DNA mismatch repair. The polypeptide is DNA mismatch repair protein MutH (Vibrio parahaemolyticus serotype O3:K6 (strain RIMD 2210633)).